A 266-amino-acid polypeptide reads, in one-letter code: Killer cell lectin-like receptor 6 (266 aa).

Residues 1–44 (MSEPEVTYSTVRLHKSSRLQKLVRHEETQGPREAGYRKCSVCWQ) are Cytoplasmic-facing. The chain crosses the membrane as a helical; Signal-anchor for type II membrane protein span at residues 45–66 (LIVKALGILCFLLLITVAVLAV). Residues 67-266 (KIFQYGQHNQ…CGKKLDKFPH (200 aa)) are Extracellular-facing. 2 N-linked (GlcNAc...) asparagine glycosylation sites follow: Asn87 and Asn104. One can recognise a C-type lectin domain in the interval 143 to 261 (GVKYWFCYRT…SHYCICGKKL (119 aa)). 4 disulfides stabilise this stretch: Cys149–Cys154, Cys167–Cys255, Cys171–Cys257, and Cys236–Cys249.

Homodimer; disulfide-linked.

Its subcellular location is the membrane. Functionally, receptor on natural killer (NK) cells for class I MHC. The chain is Killer cell lectin-like receptor 6 (Klra6) from Mus musculus (Mouse).